The following is a 372-amino-acid chain: tRNA-specific 2-thiouridylase MnmA 1 (372 aa).

ATP-binding positions include 26-33 (AISGGVDS) and Met52. Residue Cys118 is the Nucleophile of the active site. Cys118 and Cys214 are oxidised to a cystine. Gly142 contacts ATP. The segment at 164–166 (KDQ) is interaction with tRNA. Cys214 serves as the catalytic Cysteine persulfide intermediate.

This sequence belongs to the MnmA/TRMU family.

It localises to the cytoplasm. It carries out the reaction S-sulfanyl-L-cysteinyl-[protein] + uridine(34) in tRNA + AH2 + ATP = 2-thiouridine(34) in tRNA + L-cysteinyl-[protein] + A + AMP + diphosphate + H(+). Catalyzes the 2-thiolation of uridine at the wobble position (U34) of tRNA, leading to the formation of s(2)U34. The sequence is that of tRNA-specific 2-thiouridylase MnmA 1 from Syntrophus aciditrophicus (strain SB).